A 341-amino-acid polypeptide reads, in one-letter code: Short chain dehydrogenase virL (341 aa).

Residues L49, K74, D97, N123, Y210, and K214 each contribute to the NADP(+) site. Y210 acts as the Proton donor in catalysis. Catalysis depends on K214, which acts as the Lowers pKa of active site Tyr.

The protein belongs to the short-chain dehydrogenases/reductases (SDR) family.

Its pathway is secondary metabolite biosynthesis. In terms of biological role, short chain dehydrogenase; part of the gene cluster that mediates the biosynthesis of virensols and trichoxide, fungal natural products that contain or are derived from a salicylaldehyde core. The pathway begins with the synthesis of the reduced chain in virensol C by the highly reducing polyketide synthase virA via condensation of one acetate and 8 malonate units. VirA has interesting programming rules since the first 2 ketides are fully reduced, the 3 following ketides undergo beta-dehydration, and the last 3 ketides are only reduced to beta-hydroxys to yield the trihydroxy portion. The production of aldehyde virensol C by virA alone is surprising, since virA does not contain a reductase (R) domain that is typically associated with reductive product release in HRPKS. The cupin-domain enzyme virC is involved in enhancing virA product turnover. The short-chain dehydrogenase virB then oxidizes the C-7 alcohol of virensol C to a ketone, yielding virensol D. Virensol D is further transformed to salicylaldehyde 5-deoxyaurocitrin by the short-chain dehydrogenase virD. VirD catalyzes the dehydrogenation of C-3 to form the beta-ketone aldehyde, which is followed by the generation of the nucleophilic C-2 that is required for the intramolecular aldol condensation between C-2 and C-7, itself followed by dehydration and aromatization which leads to salicylaldehyde 5-deoxyaurocitrin. While the dehydrogenation of virensol D is definitely catalyzed by virD, the aldol condensation and dehydration may be uncatalyzed or assisted by virD. The short chain dehydrogenase virG then converts salicylaldehyde 5-deoxyaurocitrin into virensol B which is further hydroxylated by the cytochrome P450 monooxygenase virE to yield the hydroquinone virensol A. VirI then may oxidize virensol A to form the quinone, while virH performs the epoxidation. Finally, the two remaining short-chain dehydrogenases, virK and virL, are probably responsible for reducing the ketones to the corresponding alcohols to furnish the epoxycyclohexanol structure in trichoxide. The protein is Short chain dehydrogenase virL of Hypocrea virens (strain Gv29-8 / FGSC 10586) (Gliocladium virens).